The sequence spans 4960 residues: Malformin synthetase mlfA (4960 aa).

The interval 194 to 564 (ERHATNRPHS…CGRADTQVKL (371 aa)) is adenylation 1. A Carrier 1 domain is found at 705-778 (SRLEQEVQLA…EAASLAEVQE (74 aa)). S739 carries the post-translational modification O-(pantetheine 4'-phosphoryl)serine. The condensation 1 stretch occupies residues 816-1247 (EDVFPCTTMQ…ALNTLSLLQA (432 aa)). The segment at 1275 to 1650 (DRWVTRQPEG…GRKDTQVKLR (376 aa)) is adenylation 2. Positions 1777 to 1854 (TPASELERTL…HLAAEVGEPA (78 aa)) constitute a Carrier 2 domain. Disordered regions lie at residues 1855 to 1883 (GQSA…NDGV) and 1917 to 1943 (GGSS…KKNA). 2 stretches are compositionally biased toward low complexity: residues 1857-1881 (SASS…STND) and 1919-1936 (SSSN…SSSS). Residues 1989–2404 (EDIYPATALQ…AVSCSDKETL (416 aa)) are condensation 2. Positions 2427-2819 (RRTPHAPAVC…IGRRDGQLKL (393 aa)) are adenylation 3. The Carrier 3 domain maps to 2955-3031 (RPVTSQEREM…QLICHINTIR (77 aa)). Residue S2992 is modified to O-(pantetheine 4'-phosphoryl)serine. 2 condensation regions span residues 3049-3464 (VALA…FTFP) and 3520-3889 (SGYV…EQLV). Positions 3914 to 4304 (HNSRQAVCAW…VGRKDNQIKF (391 aa)) are adenylation 4. Positions 4438–4514 (MPSTAAERKM…DLSDQAKSLI (77 aa)) constitute a Carrier 4 domain. S4475 is modified (O-(pantetheine 4'-phosphoryl)serine). The interval 4551 to 4878 (DVLPTTSFQH…LQTIVQHQNN (328 aa)) is condensation 5.

It belongs to the NRP synthetase family.

The protein operates within secondary metabolite biosynthesis. In terms of biological role, nonribosomal peptide synthetase; part of the gene cluster that mediates the biosynthesis of malformins, cyclic pentapeptides with a disulfide bond between 2 consecutive cysteins, that show potential anti-tumor as well as antimalarial and antitrypanosomal properties. The nonribosomal peptide synthetase mlfA is responsible of the formation of the cyclic pentapeptide. The malformin biosynthesis clusters in malformin-producing fungi also contain enzymes involved in the formation of the disulfide bond between the two consecutive cysteins within malformins, in addition to additional tailoring enzymes such as methyltransferases or oxidoreductases. They are also composed of up to 4 major facilitator superfamily transporters, and transcription factors probably involved in the regulation of the expression of those clusters. The protein is Malformin synthetase mlfA of Aspergillus neoniger (strain CBS 115656).